Reading from the N-terminus, the 285-residue chain is V-set and transmembrane domain-containing protein 2B (285 aa).

The N-terminal stretch at Met-1–Ala-28 is a signal peptide. One can recognise an Ig-like V-type domain in the interval Ala-29 to Gln-143. Over Ala-29–Thr-263 the chain is Extracellular. Cysteines 49 and 127 form a disulfide. The segment at Glu-161–Thr-226 is disordered. 2 stretches are compositionally biased toward low complexity: residues Ala-177 to Ser-189 and Pro-208 to Thr-226. Residues Thr-264–Gly-284 traverse the membrane as a helical segment. Position 285 (His-285) is a topological domain, cytoplasmic.

It is found in the membrane. The sequence is that of V-set and transmembrane domain-containing protein 2B (VSTM2B) from Homo sapiens (Human).